Reading from the N-terminus, the 103-residue chain is Signal recognition particle 19 kDa protein (103 aa).

The protein belongs to the SRP19 family. As to quaternary structure, part of the signal recognition particle protein translocation system, which is composed of SRP and FtsY. Archaeal SRP consists of a 7S RNA molecule of 300 nucleotides and two protein subunits: SRP54 and SRP19.

It is found in the cytoplasm. In terms of biological role, involved in targeting and insertion of nascent membrane proteins into the cytoplasmic membrane. Binds directly to 7S RNA and mediates binding of the 54 kDa subunit of the SRP. This chain is Signal recognition particle 19 kDa protein, found in Methanopyrus kandleri (strain AV19 / DSM 6324 / JCM 9639 / NBRC 100938).